Here is a 977-residue protein sequence, read N- to C-terminus: Short transient receptor potential channel 4 (977 aa).

Residues 1 to 324 (MAQFYYKRNV…YDEFPGWRRR (324 aa)) lie on the Cytoplasmic side of the membrane. ANK repeat units follow at residues 29–60 (LSPSEKAYLNAVEKGDYASVKKSLEEAEIYFK), 71–93 (RTALLIAIENENLELIELLLSFN), 96–118 (VGDALLHAIRKEVVGAVELLLNH), and 141–165 (PDITPIILAAHTNNYEIIKLLVQKG). Residues His-172, Cys-176, Cys-178, and Cys-181 each coordinate Zn(2+). Positions 223-260 (LSWELQELSKVENEFKSEYEELSRQCKQFAKDLLDQTR) form a coiled coil. An intramembrane region (discontinuously helical) is located at residues 325 to 359 (HWAVKMVTCFIIGLLFPVFSVCYLIAPKSPLGLFI). At 360–362 (RKP) the chain is on the cytoplasmic side. A helical transmembrane segment spans residues 363–383 (FIKFICHTASYLTFLFLLLLA). The Extracellular portion of the chain corresponds to 384–403 (SQHIDRSDLNRQGPPPTIVE). A helical membrane pass occupies residues 404–418 (WMILPWVLGFIWGEI). Ca(2+) is bound by residues Glu-417, Gln-420, Asn-435, and Asp-438. Residues 419–432 (KQMWDGGLQDYIHD) lie on the Cytoplasmic side of the membrane. Residues 433–453 (WWNLMDFVMNSLYLATISLKI) form a helical membrane-spanning segment. Residues 454-475 (VAFVKYSALNPRESWDMWHPTL) are Extracellular-facing. The helical transmembrane segment at 476–498 (VAEALFAIANIFSSLRLISLFTA) threads the bilayer. Topologically, residues 499–511 (NSHLGPLQISLGR) are cytoplasmic. Residues 512–534 (MLLDILKFLFIYCLVLLAFANGL) form a helical membrane-spanning segment. Residues 535 to 599 (NQLYFYYEET…HEFTDFVGAT (65 aa)) are Extracellular-facing. Cysteines 549 and 554 form a disulfide. Residues 600–620 (MFGTYNVISLVVLLNMLIAMM) traverse the membrane as a helical segment. An interaction with ITPR1, ITPR2 and ITPR3 region spans residues 615-977 (MLIAMMNNSY…AHEDYVTTRL (363 aa)). The Cytoplasmic portion of the chain corresponds to 621–977 (NNSYQLIADH…AHEDYVTTRL (357 aa)). The tract at residues 767–790 (AASSASSADSDEKSHSEGNGKDKR) is disordered. Positions 776-787 (SDEKSHSEGNGK) are enriched in basic and acidic residues. 2 positions are modified to phosphotyrosine; by FYN: Tyr-959 and Tyr-972. Positions 975-977 (TRL) are PDZ-binding domain.

Belongs to the transient receptor (TC 1.A.4) family. STrpC subfamily. TRPC4 sub-subfamily. In terms of assembly, homotetramer. Heterotetramer with TRPC1 and/or TRPC5. Forms a heteromeric ion channel with TRPC1, with a 1:3 TRPC1:TRPC4 stoichiometry. Interacts with TRPC4AP. Isoform alpha but not isoform beta interacts with ITPR1, ITPR2 and ITPR3. Interacts with NHERF1. Interacts with MX1 and RNF24. Interacts (via CIRB domain) with SESTD1 (via the spectrin 1 repeat) and SPTBN5 (via C-terminus). Interacts with CDH5 and CTNNB1. Interacts (via protein 4.1-binding domain) with EPB41L2. Interacts with PLSCR1.

Its subcellular location is the cell membrane. The enzyme catalyses Ca(2+)(in) = Ca(2+)(out). It catalyses the reaction Na(+)(in) = Na(+)(out). It carries out the reaction Li(+)(in) = Li(+)(out). The catalysed reaction is Cs(+)(in) = Cs(+)(out). May be operated by a phosphatidylinositol second messenger system activated by receptor tyrosine kinases or G-protein coupled receptors. May be activated by intracellular calcium store depletion. Forms a receptor-activated non-selective calcium permeant cation channel. Acts as a cell-cell contact-dependent endothelial calcium entry channel. Forms a homomeric ion channel or a heteromeric ion channel with TRPC1; the heteromeric ion channel has reduced calcium permeability compared to the homomeric channel. Also permeable to monovalent ions including sodium, lithium and cesium ions. Its function is as follows. Forms a non-selective a receptor-activated calcium permeant cation channel. Probably is operated by a phosphatidylinositol second messenger system activated by receptor tyrosine kinases or G-protein coupled receptors. This chain is Short transient receptor potential channel 4 (Trpc4), found in Rattus norvegicus (Rat).